The primary structure comprises 346 residues: MASLGGDNSQAEGAEVRHVPVLIAEVIDALKPAPGAVIVDGTFGAGGYTRRILETGADVIAIDRDPTAIEAGRAMEKEFPGRLNLVESRFSALDEAVARMSGAGKKVDGVVLDIGVSSMQIDEAERGFSFQKDGPLDMRMSSRGPSAADAVNRLKTGDLARIFNFLGEERHAGRIARMIEKRRAAKPFTRTLDLANAIETLVGRNPKDRIHPATRVFQALRVYVNDELGELARALLAAERILKPGGRLVVVTFHSLEDRMVKRFFADRAGGSAGSRHMPETHMRLPSFTPAVKGAVGPTPEEEERNPRARSAKLRAGIRTENPPLEDDLSLFGLPKLPETNELARS.

Residues 46–48 (GGY), aspartate 63, phenylalanine 90, aspartate 113, and glutamine 120 contribute to the S-adenosyl-L-methionine site. Residues 270–346 (GGSAGSRHMP…LPETNELARS (77 aa)) form a disordered region.

The protein belongs to the methyltransferase superfamily. RsmH family.

It localises to the cytoplasm. The catalysed reaction is cytidine(1402) in 16S rRNA + S-adenosyl-L-methionine = N(4)-methylcytidine(1402) in 16S rRNA + S-adenosyl-L-homocysteine + H(+). Specifically methylates the N4 position of cytidine in position 1402 (C1402) of 16S rRNA. This Brucella abortus (strain S19) protein is Ribosomal RNA small subunit methyltransferase H.